The chain runs to 441 residues: Arginine biosynthesis bifunctional protein ArgJ, mitochondrial (441 aa).

A mitochondrion-targeting transit peptide spans 1-8 (MRISSTLL). Substrate is bound by residues T177, K204, T215, E301, N436, and S441. T215 acts as the Nucleophile in catalysis.

The protein belongs to the ArgJ family. Heterodimer of an alpha and a beta chain. In terms of processing, the alpha and beta chains are autoproteolytically processed from a single precursor protein within the mitochondrion.

The protein resides in the mitochondrion matrix. The catalysed reaction is N(2)-acetyl-L-ornithine + L-glutamate = N-acetyl-L-glutamate + L-ornithine. It catalyses the reaction L-glutamate + acetyl-CoA = N-acetyl-L-glutamate + CoA + H(+). It participates in amino-acid biosynthesis; L-arginine biosynthesis; L-ornithine and N-acetyl-L-glutamate from L-glutamate and N(2)-acetyl-L-ornithine (cyclic): step 1/1. Its pathway is amino-acid biosynthesis; L-arginine biosynthesis; N(2)-acetyl-L-ornithine from L-glutamate: step 1/4. With respect to regulation, inhibited by ornithine. Functionally, catalyzes two activities which are involved in the cyclic version of arginine biosynthesis: the synthesis of acetylglutamate from glutamate and acetyl-CoA, and of ornithine by transacetylation between acetylornithine and glutamate. The protein is Arginine biosynthesis bifunctional protein ArgJ, mitochondrial of Saccharomyces cerevisiae (strain ATCC 204508 / S288c) (Baker's yeast).